A 159-amino-acid chain; its full sequence is Cyclic pyranopterin monophosphate synthase (159 aa).

Substrate is bound by residues leucine 75–histidine 77 and methionine 113–glutamate 114. The active site involves aspartate 128.

Belongs to the MoaC family. Homohexamer; trimer of dimers.

It catalyses the reaction (8S)-3',8-cyclo-7,8-dihydroguanosine 5'-triphosphate = cyclic pyranopterin phosphate + diphosphate. It participates in cofactor biosynthesis; molybdopterin biosynthesis. In terms of biological role, catalyzes the conversion of (8S)-3',8-cyclo-7,8-dihydroguanosine 5'-triphosphate to cyclic pyranopterin monophosphate (cPMP). This chain is Cyclic pyranopterin monophosphate synthase, found in Cupriavidus metallidurans (strain ATCC 43123 / DSM 2839 / NBRC 102507 / CH34) (Ralstonia metallidurans).